The following is a 150-amino-acid chain: Small ribosomal subunit protein uS11 (150 aa).

Belongs to the universal ribosomal protein uS11 family. In terms of assembly, part of the 30S ribosomal subunit. Interacts with proteins S7 and S18. Binds to IF-3.

Located on the platform of the 30S subunit, it bridges several disparate RNA helices of the 16S rRNA. Forms part of the Shine-Dalgarno cleft in the 70S ribosome. The chain is Small ribosomal subunit protein uS11 from Pelagibacter ubique (strain HTCC1062).